Consider the following 341-residue polypeptide: Heat-inducible transcription repressor HrcA (341 aa).

Belongs to the HrcA family.

In terms of biological role, negative regulator of class I heat shock genes (grpE-dnaK-dnaJ and groELS operons). Prevents heat-shock induction of these operons. The sequence is that of Heat-inducible transcription repressor HrcA from Symbiobacterium thermophilum (strain DSM 24528 / JCM 14929 / IAM 14863 / T).